We begin with the raw amino-acid sequence, 432 residues long: UDP-N-acetylmuramate--L-alanine ligase (432 aa).

Position 108–114 (108–114 (GAHGKTS)) interacts with ATP.

Belongs to the MurCDEF family.

It is found in the cytoplasm. The enzyme catalyses UDP-N-acetyl-alpha-D-muramate + L-alanine + ATP = UDP-N-acetyl-alpha-D-muramoyl-L-alanine + ADP + phosphate + H(+). The protein operates within cell wall biogenesis; peptidoglycan biosynthesis. Cell wall formation. This is UDP-N-acetylmuramate--L-alanine ligase from Bacillus licheniformis (strain ATCC 14580 / DSM 13 / JCM 2505 / CCUG 7422 / NBRC 12200 / NCIMB 9375 / NCTC 10341 / NRRL NRS-1264 / Gibson 46).